Reading from the N-terminus, the 247-residue chain is 23S rRNA (guanosine-2'-O-)-methyltransferase RlmB (247 aa).

S-adenosyl-L-methionine contacts are provided by Gly-197, Ile-217, and Leu-226.

The protein belongs to the class IV-like SAM-binding methyltransferase superfamily. RNA methyltransferase TrmH family. RlmB subfamily.

The protein localises to the cytoplasm. It catalyses the reaction guanosine(2251) in 23S rRNA + S-adenosyl-L-methionine = 2'-O-methylguanosine(2251) in 23S rRNA + S-adenosyl-L-homocysteine + H(+). Functionally, specifically methylates the ribose of guanosine 2251 in 23S rRNA. The chain is 23S rRNA (guanosine-2'-O-)-methyltransferase RlmB from Vibrio parahaemolyticus serotype O3:K6 (strain RIMD 2210633).